Reading from the N-terminus, the 185-residue chain is Putative F-box protein At3g17400 (185 aa).

In terms of domain architecture, F-box spans 1 to 47; the sequence is MMTLSDLPSDLAEEVLSKIPVTSLRGVRATCKKWNTLSKDRSFTRKH.

The protein is Putative F-box protein At3g17400 of Arabidopsis thaliana (Mouse-ear cress).